The sequence spans 417 residues: Probable serine/threonine-protein kinase WNK9 (417 aa).

The tract at residues 1–23 (MDLVEAEAEEQPPDEDGDEEGYV) is disordered. Residues 32–289 (IRYDEIVGSG…ATELLKSSFL (258 aa)) form the Protein kinase domain. ATP is bound by residues 113-116 (TELF) and lysine 163. Aspartate 180 serves as the catalytic Proton acceptor.

This sequence belongs to the protein kinase superfamily. Ser/Thr protein kinase family. WNK subfamily.

It catalyses the reaction L-seryl-[protein] + ATP = O-phospho-L-seryl-[protein] + ADP + H(+). The enzyme catalyses L-threonyl-[protein] + ATP = O-phospho-L-threonyl-[protein] + ADP + H(+). This chain is Probable serine/threonine-protein kinase WNK9 (WNK9), found in Oryza sativa subsp. japonica (Rice).